The primary structure comprises 380 residues: Protein Wnt-5a (380 aa).

Positions 1-37 are cleaved as a signal peptide; it reads MKKPIGILSPGVALGTAGGAMSSKFFLMALATFFSFA. The propeptide occupies 38 to 61; that stretch reads QVVIEANSWWSLGMNNPVQMSEVH. Cys-104 and Cys-115 form a disulfide bridge. Asn-114 and Asn-120 each carry an N-linked (GlcNAc...) asparagine glycan. Intrachain disulfides connect Cys-154/Cys-162, Cys-164/Cys-182, Cys-238/Cys-252, Cys-240/Cys-247, Cys-309/Cys-340, Cys-325/Cys-335, Cys-339/Cys-379, Cys-355/Cys-370, Cys-357/Cys-367, and Cys-362/Cys-363. Ser-244 is lipidated: O-palmitoleoyl serine; by PORCN. Asn-312 and Asn-326 each carry an N-linked (GlcNAc...) asparagine glycan.

Belongs to the Wnt family. In terms of assembly, forms a soluble 1:1 complex with AFM; this prevents oligomerization and is required for prolonged biological activity. The complex with AFM may represent the physiological form in body fluids. Homooligomer; disulfide-linked, leading to inactivation (in vitro). Interacts with PORCN. Interacts with WLS. Interacts with glypican GCP3. Interacts with PKD1 (via extracellular domain). Interacts with TMEM67. Glycosylation is necessary for secretion but not for activity. In terms of processing, palmitoleoylation is required for efficient binding to frizzled receptors. Depalmitoleoylation leads to Wnt signaling pathway inhibition. Post-translationally, proteolytic processing by TIKI1 and TIKI2 promotes oxidation and formation of large disulfide-bond oligomers, leading to inactivation of WNT5A.

It localises to the secreted. The protein localises to the extracellular space. The protein resides in the extracellular matrix. Its function is as follows. Ligand for members of the frizzled family of seven transmembrane receptors. Can activate or inhibit canonical Wnt signaling, depending on receptor context. In the presence of FZD4, activates beta-catenin signaling. In the presence of ROR2, inhibits the canonical Wnt pathway by promoting beta-catenin degradation through a GSK3-independent pathway which involves down-regulation of beta-catenin-induced reporter gene expression. Suppression of the canonical pathway allows chondrogenesis to occur and inhibits tumor formation. Stimulates cell migration. Decreases proliferation, migration, invasiveness and clonogenicity of carcinoma cells and may act as a tumor suppressor. Mediates motility of melanoma cells. Required during embryogenesis for extension of the primary anterior-posterior axis and for outgrowth of limbs and the genital tubercle. Inhibits type II collagen expression in chondrocytes. The chain is Protein Wnt-5a (Wnt5a) from Rattus norvegicus (Rat).